The following is an 898-amino-acid chain: Eukaryotic translation initiation factor 3 subunit C (898 aa).

A compositionally biased stretch (basic and acidic residues) spans 1-10; it reads MSRFFHAKED. Disordered stretches follow at residues 1–38 and 162–238; these read MSRFFHAKEDSDSDTSSSEDEVEDQKVNKSAKFRDDLD and VTDY…SVTK. A compositionally biased stretch (acidic residues) spans 11–23; sequence SDSDTSSSEDEVE. The span at 24–37 shows a compositional bias: basic and acidic residues; it reads DQKVNKSAKFRDDL. Residues 170–187 are compositionally biased toward acidic residues; that stretch reads DEDGYETPEDEDDDDFGE. Residues 189 to 202 show a composition bias toward basic and acidic residues; it reads SESKAEKSPGKPSE. Acidic residues predominate over residues 209 to 218; the sequence is SDSDSDDDDS. Residues 219–228 are compositionally biased toward low complexity; it reads SNWSSEPESN. In terms of domain architecture, PCI spans 630–806; it reads YHMHINVELM…DCLIMHRVEP (177 aa). Positions 829 to 898 are disordered; sequence QILEPRTGRG…RRHPQKPRAF (70 aa). Basic and acidic residues-rich tracts occupy residues 850–859 and 866–878; these read RNERQGDKQK and GERRGGQGQDGKR. A compositionally biased stretch (basic residues) spans 888-898; it reads QRRHPQKPRAF.

It belongs to the eIF-3 subunit C family. Component of the eukaryotic translation initiation factor 3 (eIF-3) complex.

The protein resides in the cytoplasm. In terms of biological role, component of the eukaryotic translation initiation factor 3 (eIF-3) complex, which is involved in protein synthesis of a specialized repertoire of mRNAs and, together with other initiation factors, stimulates binding of mRNA and methionyl-tRNAi to the 40S ribosome. The eIF-3 complex specifically targets and initiates translation of a subset of mRNAs involved in cell proliferation. This chain is Eukaryotic translation initiation factor 3 subunit C, found in Caenorhabditis elegans.